The following is a 44-amino-acid chain: Non-structural protein 7b (44 aa).

The helical transmembrane segment at 9–29 (FYLCFLAFLLFLVLIMLIIFW) threads the bilayer.

It is found in the host membrane. This is Non-structural protein 7b from Bat coronavirus Rp3/2004 (BtCoV/Rp3/2004).